Here is a 1955-residue protein sequence, read N- to C-terminus: Protocadherin-15 (1955 aa).

The N-terminal stretch at 1–26 (MFRQFYLWTCLASGIILGSLFEICLG) is a signal peptide. Residues 27 to 1376 (QYDDDCKLAR…GESLGYTEGA (1350 aa)) lie on the Extracellular side of the membrane. A disulfide bond links cysteine 32 and cysteine 120. Cadherin domains lie at 40–147 (PATI…SPTF), 148–265 (KHES…GPMF), 278–395 (RPLT…SPYF), 396–509 (TMPS…TPTF), 510–616 (PEIS…PPRF), 617–717 (PQLM…APVF), 719–819 (PYLP…SPVF), 820–926 (TNST…PPVF), 927–1035 (SKRI…IPRF), 1037–1144 (QEEY…PPVF), and 1145–1259 (QKKF…PPTL). N-linked (GlcNAc...) asparagine glycosylation is found at asparagine 52, asparagine 97, and asparagine 201. 7 N-linked (GlcNAc...) asparagine glycosylation sites follow: asparagine 419, asparagine 559, asparagine 662, asparagine 724, asparagine 768, asparagine 821, and asparagine 851. N-linked (GlcNAc...) asparagine glycosylation is found at asparagine 1064, asparagine 1084, and asparagine 1175. Residues 1377 to 1397 (LLALAFIIILCCIPAILVVLV) traverse the membrane as a helical segment. Residues 1398–1955 (SYRQFKVRQA…KQSHSQSTSL (558 aa)) are Cytoplasmic-facing. Residues 1426-1444 (VPAPAPVAAPPPPPPPPPG) are compositionally biased toward pro residues. Disordered regions lie at residues 1426–1446 (VPAP…PGAH), 1601–1623 (QGTR…GSSN), 1745–1766 (CPLP…APLA), and 1928–1955 (ITSE…STSL). Polar residues predominate over residues 1928-1941 (ITSEQNKGSLNNIV).

Antiparallel heterodimer with CDH23. Found in a complex with TMIE and LHFPL5. Interacts with LHFPL5/TMHS; this interaction is required for efficient localization to hair bundles. Interacts with MYO7A. Interacts with USH1G; this interaction may recruit USH1G to the plasma membrane. Interacts with TOMT. Isoforms CD1 and CD3 interact with TMC1 (via N-terminus) and TMC2 (via N-terminus). Expressed in brain, lung, kidney, spleen and testis. Found also in the inner and outer synaptic layers, and the nerve fiber layer in adult and fetal retinas. Found in the supporting cells, outer sulcus cells and spiral ganglion of fetal cochlea. Expressed in cytotoxic tumor-derived T- and NK-cell lines as well as biopsies of nasal NK/T-cell lymphomas. Not detected in normal or in vitro activated peripheral blood cells, CD4 or CD8 lymphocytes or NK cells. Isoform 3 is expressed in brain, heart, cerebellum and kidney. CD1 isoforms, such as isoform 1, have a limited pattern of expression and is detected in testis, retina and cochlea. CD2 isoforms, such as isoforms 4 and 5, are expressed in heart, kidney, thymus, spleen, testis, retina and cochlea. CD3 isoforms, such as isoform 6, are widely expressed.

The protein localises to the cell membrane. It is found in the secreted. Functionally, calcium-dependent cell-adhesion protein. Essential for maintenance of normal retinal and cochlear function. The polypeptide is Protocadherin-15 (PCDH15) (Homo sapiens (Human)).